The chain runs to 68 residues: Large ribosomal subunit protein uL29 (68 aa).

This sequence belongs to the universal ribosomal protein uL29 family.

The polypeptide is Large ribosomal subunit protein uL29 (Streptococcus thermophilus (strain ATCC BAA-250 / LMG 18311)).